A 435-amino-acid chain; its full sequence is Transcription activator AKTR-2 (435 aa).

The segment at residues 16–43 is a DNA-binding region (zn(2)-C6 fungal-type); it reads CDFCTQSKLRCNKNKPSCRRCTIQQQVC. A disordered region spans residues 49-103; it reads RRTGRPPKHPRRADDSQETSGQHGHQDPMTSAPADSCEQQSSHLDLEGDDTDFTL. Basic residues predominate over residues 50-59; that stretch reads RTGRPPKHPR.

The protein resides in the nucleus. In terms of biological role, transcription factor that regulates the expression of the gene clusters that mediate the biosynthesis of the host-selective toxins (HSTs) AK-toxins responsible for Japanese pear black spot disease by the Japanese pear pathotype. AK-toxins are esters of 9,10-epoxy 8-hydroxy 9-methyldecatrienoic acid (EDA). On cellular level, AK-toxins affect plasma membrane of susceptible cells and cause a sudden increase in loss of K(+) after a few minutes of toxin treatment. The protein is Transcription activator AKTR-2 of Alternaria alternata (Alternaria rot fungus).